A 183-amino-acid chain; its full sequence is CyanoP (183 aa).

The signal sequence occupies residues 1–19 (MLQRFFATALAIFVVLLGG). Cys-20 carries the N-palmitoyl cysteine lipid modification. Cys-20 is lipidated: S-diacylglycerol cysteine. 10 residues coordinate Zn(2+): Asp-31, Asp-34, Asp-54, His-58, Thr-63, Glu-87, Asp-91, His-142, Glu-163, and Glu-164.

It belongs to the PsbP family. CyanoP subfamily. Monomer. Present in very small amounts in PSII. Requires Zn(2+) as cofactor.

The protein resides in the cellular thylakoid membrane. In terms of biological role, plays a role in the early stages of photosystem II (PSII) assembly; binds to D2 (psbD) and may facilitate its incorporation into PSII. Present in less than 1% of PSII preparations. The sequence is that of CyanoP from Thermosynechococcus vestitus (strain NIES-2133 / IAM M-273 / BP-1).